Consider the following 737-residue polypeptide: Phosphoribosylformylglycinamidine synthase subunit PurL (737 aa).

Histidine 50 is a catalytic residue. The ATP site is built by tyrosine 53 and lysine 92. A Mg(2+)-binding site is contributed by glutamate 94. Substrate-binding positions include 95–98 and arginine 117; that span reads SHNH. Residue histidine 96 is the Proton acceptor of the active site. Aspartate 118 is a binding site for Mg(2+). Glutamine 241 serves as a coordination point for substrate. Aspartate 269 provides a ligand contact to Mg(2+). Residue 313 to 315 coordinates substrate; sequence ESQ. The ATP site is built by aspartate 495 and glycine 532. Asparagine 533 is a Mg(2+) binding site. Serine 535 is a binding site for substrate.

It belongs to the FGAMS family. As to quaternary structure, monomer. Part of the FGAM synthase complex composed of 1 PurL, 1 PurQ and 2 PurS subunits.

It is found in the cytoplasm. It carries out the reaction N(2)-formyl-N(1)-(5-phospho-beta-D-ribosyl)glycinamide + L-glutamine + ATP + H2O = 2-formamido-N(1)-(5-O-phospho-beta-D-ribosyl)acetamidine + L-glutamate + ADP + phosphate + H(+). It functions in the pathway purine metabolism; IMP biosynthesis via de novo pathway; 5-amino-1-(5-phospho-D-ribosyl)imidazole from N(2)-formyl-N(1)-(5-phospho-D-ribosyl)glycinamide: step 1/2. Its function is as follows. Part of the phosphoribosylformylglycinamidine synthase complex involved in the purines biosynthetic pathway. Catalyzes the ATP-dependent conversion of formylglycinamide ribonucleotide (FGAR) and glutamine to yield formylglycinamidine ribonucleotide (FGAM) and glutamate. The FGAM synthase complex is composed of three subunits. PurQ produces an ammonia molecule by converting glutamine to glutamate. PurL transfers the ammonia molecule to FGAR to form FGAM in an ATP-dependent manner. PurS interacts with PurQ and PurL and is thought to assist in the transfer of the ammonia molecule from PurQ to PurL. This chain is Phosphoribosylformylglycinamidine synthase subunit PurL, found in Bartonella bacilliformis (strain ATCC 35685 / KC583 / Herrer 020/F12,63).